We begin with the raw amino-acid sequence, 285 residues long: MEATVLLVTDSITLSSKVVTWAIQEFKEKADRGNNLCVLTQANSLEWKSYFSSSSLDVVVFFSEKCEFHKQNLVVELARILKPGGAVFIQTLVSMEDGTTKIHASLEHSLLLAGFVRPEVVASVEGLASSDGLELFALRAQKPTWETGSSFSLKKKSVQKQESLPKPGALSVKPEMNVDLEDLIDEESLLSEEDLKRPPLPSASDCEVSTKRKACKNCTCGRAELEEKQTKLGLTVEQLNNPQSACGNCGLGDAFRCSSCPYKGLSPFKLGEKVSLPGTLLTADM.

The segment at 1-150 is N-terminal SAM-like domain; sequence MEATVLLVTD…QKPTWETGSS (150 aa). The segment at 150 to 195 is linker; that stretch reads SFSLKKKSVQKQESLPKPGALSVKPEMNVDLEDLIDEESLLSEEDL. 4 residues coordinate [2Fe-2S] cluster: Cys206, Cys215, Cys218, and Cys220. Residues 206-220 are fe-S binding site A; the sequence is CEVSTKRKACKNCTC. [4Fe-4S] cluster-binding residues include Cys246, Cys249, Cys257, and Cys260. 2 consecutive short sequence motifs (cx2C motif) follow at residues 246–249 and 257–260; these read CGNC and CSSC. Residues 246-260 form a fe-S binding site B region; it reads CGNCGLGDAFRCSSC.

It belongs to the anamorsin family. In terms of assembly, monomer. [2Fe-2S] cluster serves as cofactor. [4Fe-4S] cluster is required as a cofactor.

The protein resides in the cytoplasm. Its subcellular location is the mitochondrion intermembrane space. Component of the cytosolic iron-sulfur (Fe-S) protein assembly (CIA) machinery. Required for the maturation of extramitochondrial Fe-S proteins. Part of an electron transfer chain functioning in an early step of cytosolic Fe-S biogenesis, facilitating the de novo assembly of a [4Fe-4S] cluster on the cytosolic Fe-S scaffold complex. Electrons are transferred from NADPH via a FAD- and FMN-containing diflavin oxidoreductase. Together with the diflavin oxidoreductase, also required for the assembly of the diferric tyrosyl radical cofactor of ribonucleotide reductase (RNR), probably by providing electrons for reduction during radical cofactor maturation in the catalytic small subunit. The protein is Anamorsin homolog 1 of Picea sitchensis (Sitka spruce).